A 146-amino-acid polypeptide reads, in one-letter code: Mediator of RNA polymerase II transcription subunit 31 (146 aa).

The tract at residues 121–146 (NANDQDENKEKEENKEVPEVRINGTN) is disordered. Residues 126 to 139 (DENKEKEENKEVPE) show a composition bias toward basic and acidic residues.

This sequence belongs to the Mediator complex subunit 31 family. In terms of assembly, component of the Mediator complex.

Its subcellular location is the nucleus. In terms of biological role, component of the Mediator complex, a coactivator involved in the regulated transcription of nearly all RNA polymerase II-dependent genes. Mediator functions as a bridge to convey information from gene-specific regulatory proteins to the basal RNA polymerase II transcription machinery. Mediator is recruited to promoters by direct interactions with regulatory proteins and serves as a scaffold for the assembly of a functional preinitiation complex with RNA polymerase II and the general transcription factors. The sequence is that of Mediator of RNA polymerase II transcription subunit 31 (SOH1) from Candida albicans (strain SC5314 / ATCC MYA-2876) (Yeast).